The primary structure comprises 200 residues: Serine/threonine-protein kinase mos (200 aa).

The Protein kinase domain maps to 2-200 (LCLLQPLGSG…ELLKGERVTA (199 aa)). ATP contacts are provided by residues 8-16 (LGSGGFGSV) and Lys-29. The active-site Proton acceptor is Asp-143.

This sequence belongs to the protein kinase superfamily. Ser/Thr protein kinase family.

It carries out the reaction L-seryl-[protein] + ATP = O-phospho-L-seryl-[protein] + ADP + H(+). The catalysed reaction is L-threonyl-[protein] + ATP = O-phospho-L-threonyl-[protein] + ADP + H(+). The protein is Serine/threonine-protein kinase mos (MOS) of Apteryx australis (Southern brown kiwi).